The sequence spans 153 residues: Small ribosomal subunit protein uS13 (153 aa).

The protein belongs to the universal ribosomal protein uS13 family. Part of the 30S ribosomal subunit. Forms a loose heterodimer with protein S19. Forms two bridges to the 50S subunit in the 70S ribosome.

Located at the top of the head of the 30S subunit, it contacts several helices of the 16S rRNA. In the 70S ribosome it contacts the 23S rRNA (bridge B1a) and protein L5 of the 50S subunit (bridge B1b), connecting the 2 subunits; these bridges are implicated in subunit movement. The protein is Small ribosomal subunit protein uS13 of Pyrobaculum calidifontis (strain DSM 21063 / JCM 11548 / VA1).